Consider the following 317-residue polypeptide: Small ribosomal subunit protein uS2 (317 aa).

Position 2 is an N-acetylserine (Ser2). Laminin-binding regions lie at residues Ile161–Arg180 and Arg205–Gly229. 2 [DE]-W-[ST] repeats span residues Glu230–Thr232 and Asp245–Ser247. Residues Glu242–Ser317 are laminin-binding. Residues Glu271–Gly284 are compositionally biased toward low complexity. A disordered region spans residues Glu271–Ser317. [DE]-W-[ST] repeat units follow at residues Asp288 to Ser290, Asp297 to Ser299, and Asp315 to Ser317.

This sequence belongs to the universal ribosomal protein uS2 family. Monomer (37LRP) and homodimer (67LR). Component of the small ribosomal subunit. Mature ribosomes consist of a small (40S) and a large (60S) subunit. The 40S subunit contains about 33 different proteins and 1 molecule of RNA (18S). The 60S subunit contains about 49 different proteins and 3 molecules of RNA (28S, 5.8S and 5S). Interacts with rps21. Interacts with several laminins including at least lamb1. Interacts with mdk. In terms of processing, acylated. Acylation may be a prerequisite for conversion of the monomeric 37 kDa laminin receptor precursor (37LRP) to the mature dimeric 67 kDa laminin receptor (67LR), and may provide a mechanism for membrane association. Cleaved by stromelysin-3 (ST3) at the cell surface. Cleavage by stromelysin-3 may be a mechanism to alter cell-extracellular matrix interactions.

It localises to the cell membrane. The protein resides in the cytoplasm. The protein localises to the nucleus. In terms of biological role, required for the assembly and/or stability of the 40S ribosomal subunit. Required for the processing of the 20S rRNA-precursor to mature 18S rRNA in a late step of the maturation of 40S ribosomal subunits. Also functions as a cell surface receptor for laminin. Plays a role in cell adhesion to the basement membrane and in the consequent activation of signaling transduction pathways. May play a role in cell fate determination and tissue morphogenesis. In Salmo salar (Atlantic salmon), this protein is Small ribosomal subunit protein uS2 (rpsa).